The chain runs to 424 residues: Serine--tRNA ligase (424 aa).

231–233 (TAE) contributes to the L-serine binding site. 262–264 (RSE) contributes to the ATP binding site. L-serine is bound at residue glutamate 285. 349–352 (EISS) is a binding site for ATP. Residue serine 385 coordinates L-serine.

Belongs to the class-II aminoacyl-tRNA synthetase family. Type-1 seryl-tRNA synthetase subfamily. In terms of assembly, homodimer. The tRNA molecule binds across the dimer.

It is found in the cytoplasm. The enzyme catalyses tRNA(Ser) + L-serine + ATP = L-seryl-tRNA(Ser) + AMP + diphosphate + H(+). It carries out the reaction tRNA(Sec) + L-serine + ATP = L-seryl-tRNA(Sec) + AMP + diphosphate + H(+). The protein operates within aminoacyl-tRNA biosynthesis; selenocysteinyl-tRNA(Sec) biosynthesis; L-seryl-tRNA(Sec) from L-serine and tRNA(Sec): step 1/1. Catalyzes the attachment of serine to tRNA(Ser). Is also able to aminoacylate tRNA(Sec) with serine, to form the misacylated tRNA L-seryl-tRNA(Sec), which will be further converted into selenocysteinyl-tRNA(Sec). This Bacillus cereus (strain B4264) protein is Serine--tRNA ligase.